We begin with the raw amino-acid sequence, 454 residues long: tRNA-2-methylthio-N(6)-dimethylallyladenosine synthase (454 aa).

An MTTase N-terminal domain is found at 11–128 (KKLYIQTHGC…LPEMIETPRE (118 aa)). Residues cysteine 20, cysteine 57, cysteine 91, cysteine 165, cysteine 169, and cysteine 172 each coordinate [4Fe-4S] cluster. The Radical SAM core domain occupies 151–382 (EADGATAFVS…QTRIIQQAQE (232 aa)). Residues 385-449 (RRMVGNTERV…PNSLRGVLLG (65 aa)) form the TRAM domain.

Belongs to the methylthiotransferase family. MiaB subfamily. Monomer. It depends on [4Fe-4S] cluster as a cofactor.

It is found in the cytoplasm. The enzyme catalyses N(6)-dimethylallyladenosine(37) in tRNA + (sulfur carrier)-SH + AH2 + 2 S-adenosyl-L-methionine = 2-methylsulfanyl-N(6)-dimethylallyladenosine(37) in tRNA + (sulfur carrier)-H + 5'-deoxyadenosine + L-methionine + A + S-adenosyl-L-homocysteine + 2 H(+). Catalyzes the methylthiolation of N6-(dimethylallyl)adenosine (i(6)A), leading to the formation of 2-methylthio-N6-(dimethylallyl)adenosine (ms(2)i(6)A) at position 37 in tRNAs that read codons beginning with uridine. This is tRNA-2-methylthio-N(6)-dimethylallyladenosine synthase from Saccharophagus degradans (strain 2-40 / ATCC 43961 / DSM 17024).